The sequence spans 393 residues: Rhizopuspepsin (393 aa).

The first 21 residues, 1-21 (MKFTLISSCIAIAALAVAVDA), serve as a signal peptide directing secretion. A propeptide spans 22 to 68 (APGEKKISIPLAKNPNYKPSAKNAIQKAIAKYNKHKINTSTGGIVPD) (activation peptide). The 305-residue stretch at 85–389 (YYGQVTIGTP…NQGVPEVQIA (305 aa)) folds into the Peptidase A1 domain. Asp-103 is an active-site residue. A disulfide bridge links Cys-116 with Cys-119. Asp-286 is a catalytic residue. Cys-320 and Cys-353 are disulfide-bonded.

The protein belongs to the peptidase A1 family.

It catalyses the reaction Hydrolysis of proteins with broad specificity similar to that of pepsin A, preferring hydrophobic residues at P1 and P1'. Clots milk and activates trypsinogen. Does not cleave 4-Gln-|-His-5, but does cleave 10-His-|-Leu-11 and 12-Val-|-Glu-13 in B chain of insulin.. The protein is Rhizopuspepsin of Rhizopus chinensis (Bread mold).